The following is a 356-amino-acid chain: Xylose/arabinose import permease protein XylH (356 aa).

10 helical membrane-spanning segments follow: residues 14-34 (LFLV…AYFS), 41-61 (IFQY…LMLC), 70-90 (ALAN…YQAI), 96-116 (IVVS…MNGL), 126-146 (LITT…YSGG), 161-181 (VSIL…LILL), 211-231 (VKII…IIQG), 242-262 (FTAD…TSLV), 266-286 (GSLV…NGFN), and 287-307 (ILGI…VVVM).

The protein belongs to the binding-protein-dependent transport system permease family. The complex is composed of two ATP-binding proteins (XylG), two transmembrane proteins (XylH) and a solute-binding protein (XylF).

The protein resides in the cell membrane. Its function is as follows. Part of the ABC transporter complex XylFGH involved in the uptake of xylose and arabinose. Responsible for the translocation of the substrate across the membrane. In Sulfolobus acidocaldarius (strain ATCC 33909 / DSM 639 / JCM 8929 / NBRC 15157 / NCIMB 11770), this protein is Xylose/arabinose import permease protein XylH.